A 662-amino-acid chain; its full sequence is Calcium-dependent protease (662 aa).

A Peptidase S8 domain is found at 196-529 (QWHLKQTTIG…YGRINALKAV (334 aa)). Catalysis depends on charge relay system residues Asp233, His270, and Ser466. The region spanning 535–662 (AQPEPVSIFT…IRSLTIELGF (128 aa)) is the P/Homo B domain.

It belongs to the peptidase S8 family.

The protein localises to the cytoplasm. Its function is as follows. Degrades phycobiliproteins in vitro. Has a substrate specificity similar to that of trypsin. The chain is Calcium-dependent protease (prcA) from Trichormus variabilis (strain ATCC 29413 / PCC 7937) (Anabaena variabilis).